Consider the following 65-residue polypeptide: Large ribosomal subunit protein bL35 (65 aa).

It belongs to the bacterial ribosomal protein bL35 family.

In Aromatoleum aromaticum (strain DSM 19018 / LMG 30748 / EbN1) (Azoarcus sp. (strain EbN1)), this protein is Large ribosomal subunit protein bL35.